The chain runs to 206 residues: KH domain-containing protein 3 (206 aa).

Residues 1-40 (MDTPRRFPTLVQLMQPKAMPVEVLGHLPKRFSWFHSEFLK) form an involved in RNA binding region. The KH; atypical domain maps to 40–103 (KNPKVVRLEV…SYQEDTIKMI (64 aa)). Over residues 144–153 (GTQRSVEVRE) the composition is skewed to basic and acidic residues. Residues 144-206 (GTQRSVEVRE…EDTRAPVTRL (63 aa)) are disordered. At Thr145 the chain carries Phosphothreonine. The span at 166-183 (TGTQQSLEAANQSGTQRS) shows a compositional bias: polar residues. The residue at position 171 (Ser171) is a Phosphoserine.

It belongs to the KHDC1 family. Component of the subcortical maternal complex (SCMC), at least composed of NLRP5, KHDC3L, OOEP, and TLE6. Within the complex, interacts with NLRP5, KHDC3L and TLE6. The SCMC may facilitate translocation of its components between the nuclear and cytoplasmic compartments. Forms a scaffold complex with OOEP/FLOPED, and interacts with BLM and TRIM25 at DNA replication forks. Interacts with PARP1; the interaction is increased following the formation of DNA double-strand breaks. Interacts with NUMA1.

It is found in the cytoplasm. The protein resides in the cell cortex. Its subcellular location is the nucleus. The protein localises to the mitochondrion. It localises to the cytoskeleton. It is found in the microtubule organizing center. The protein resides in the centrosome. Its subcellular location is the chromosome. Functionally, component of the subcortical maternal complex (SCMC), a multiprotein complex that plays a key role in early embryonic development. The SCMC complex is a structural constituent of cytoplasmic lattices, which consist in fibrous structures found in the cytoplasm of oocytes and preimplantation embryos. They are required to store maternal proteins critical for embryonic development, such as proteins that control epigenetic reprogramming of the preimplantation embryo, and prevent their degradation or activation. KHDC3 ensures proper spindle assembly by regulating the localization of AURKA via RHOA signaling and of PLK1 via a RHOA-independent process. Required for the localization of MAD2L1 to kinetochores to enable spindle assembly checkpoint function. As part of the OOEP-KHDC3 scaffold, recruits BLM and TRIM25 to DNA replication forks, thereby promoting the ubiquitination of BLM by TRIM25, enhancing BLM retainment at replication forks and therefore promoting stalled replication fork restart. Regulates homologous recombination-mediated DNA repair via recruitment of RAD51 to sites of DNA double-strand breaks, and sustainment of PARP1 activity, which in turn modulates downstream ATM or ATR activation. Activation of ATM or ATR in response to DNA double-strand breaks may be cell-type specific. Its role in DNA double-strand break repair is independent of its role in restarting stalled replication forks. Promotes neural stem cell neurogenesis and neuronal differentiation in the hippocampus. May regulate normal development of learning, memory and anxiety. Capable of binding RNA. The polypeptide is KH domain-containing protein 3 (KHDC3L) (Macaca mulatta (Rhesus macaque)).